Here is a 178-residue protein sequence, read N- to C-terminus: Ribosome maturation factor RimP (178 aa).

Belongs to the RimP family.

Its subcellular location is the cytoplasm. Functionally, required for maturation of 30S ribosomal subunits. The polypeptide is Ribosome maturation factor RimP (Streptococcus pyogenes serotype M5 (strain Manfredo)).